A 216-amino-acid chain; its full sequence is MQWTLVVPVKPLARAKSRLSDTAADAVRPGLALAFAQDTVAAALAATAVRGVVVVTDDPLAARELTALGARAVPEDPGGGPGDGLNAALRHGAALVRDVRPQSPVAALNADLPALRPGELTRVLGAAAAFPRAFLADAAGTGTTLLAAAPGHGLSPAFGPGSRTRHRRSGAVELDLTAVDSVRQDVDTGDDLRAALGLGVGPRTAAAAARLLIPGQ.

Phosphoenolpyruvate contacts are provided by threonine 143, glycine 159, and serine 162.

It belongs to the CofC family.

The catalysed reaction is phosphoenolpyruvate + GTP + H(+) = enolpyruvoyl-2-diphospho-5'-guanosine + diphosphate. It participates in cofactor biosynthesis; coenzyme F420 biosynthesis. Functionally, guanylyltransferase that catalyzes the activation of phosphoenolpyruvate (PEP) as enolpyruvoyl-2-diphospho-5'-guanosine, via the condensation of PEP with GTP. It is involved in the biosynthesis of coenzyme F420, a hydride carrier cofactor. The chain is Phosphoenolpyruvate guanylyltransferase from Streptomyces scabiei (strain 87.22).